We begin with the raw amino-acid sequence, 100 residues long: Large ribosomal subunit protein uL23 (100 aa).

Belongs to the universal ribosomal protein uL23 family. In terms of assembly, part of the 50S ribosomal subunit. Contacts protein L29, and trigger factor when it is bound to the ribosome.

Functionally, one of the early assembly proteins it binds 23S rRNA. One of the proteins that surrounds the polypeptide exit tunnel on the outside of the ribosome. Forms the main docking site for trigger factor binding to the ribosome. The chain is Large ribosomal subunit protein uL23 from Prochlorococcus marinus subsp. pastoris (strain CCMP1986 / NIES-2087 / MED4).